A 472-amino-acid chain; its full sequence is Glutamine synthetase (472 aa).

Positions 13–101 (SKARFVDLRF…TCDVIDPADG (89 aa)) constitute a GS beta-grasp domain. The GS catalytic domain occupies 108–472 (PRSIARRAEA…PLEFEMYYSL (365 aa)). Mg(2+) is bound by residues E133 and E135. ATP is bound at residue E211. Mg(2+)-binding residues include E216 and E224. L-glutamate is bound by residues 268-269 (NG) and G269. Mg(2+) is bound at residue H273. ATP contacts are provided by residues 275-277 (HQS) and S277. Residues R325, E331, and R343 each coordinate L-glutamate. Residues R343, R348, and K356 each coordinate ATP. A Mg(2+)-binding site is contributed by E361. An L-glutamate-binding site is contributed by R363. An O-AMP-tyrosine modification is found at Y401.

This sequence belongs to the glutamine synthetase family. In terms of assembly, oligomer of 12 subunits arranged in the form of two hexameric ring. Requires Mg(2+) as cofactor.

The protein resides in the cytoplasm. The enzyme catalyses L-glutamate + NH4(+) + ATP = L-glutamine + ADP + phosphate + H(+). With respect to regulation, the activity of this enzyme could be controlled by adenylation under conditions of abundant glutamine. In terms of biological role, catalyzes the ATP-dependent biosynthesis of glutamine from glutamate and ammonia. This is Glutamine synthetase from Neisseria gonorrhoeae.